The primary structure comprises 347 residues: GMP reductase (347 aa).

An NADP(+)-binding site is contributed by 108-131 (ADFQKTKDIMALTEDLIFICIDIA). Residues G181 and G183 each contribute to the K(+) site. Catalysis depends on C186, which acts as the Thioimidate intermediate. Position 216–239 (216–239 (IIGDGGCSCAGDVSKAFGGGADFV)) interacts with NADP(+).

This sequence belongs to the IMPDH/GMPR family. GuaC type 1 subfamily. As to quaternary structure, homotetramer.

It catalyses the reaction IMP + NH4(+) + NADP(+) = GMP + NADPH + 2 H(+). In terms of biological role, catalyzes the irreversible NADPH-dependent deamination of GMP to IMP. It functions in the conversion of nucleobase, nucleoside and nucleotide derivatives of G to A nucleotides, and in maintaining the intracellular balance of A and G nucleotides. This chain is GMP reductase, found in Photobacterium profundum (strain SS9).